A 253-amino-acid polypeptide reads, in one-letter code: 5'-nucleotidase SurE (253 aa).

Residues Asp8, Asp9, Ser39, and Asn95 each contribute to the a divalent metal cation site.

It belongs to the SurE nucleotidase family. Requires a divalent metal cation as cofactor.

It localises to the cytoplasm. It carries out the reaction a ribonucleoside 5'-phosphate + H2O = a ribonucleoside + phosphate. Nucleotidase that shows phosphatase activity on nucleoside 5'-monophosphates. In Kosmotoga olearia (strain ATCC BAA-1733 / DSM 21960 / TBF 19.5.1), this protein is 5'-nucleotidase SurE.